The chain runs to 211 residues: Thiamine-phosphate synthase (211 aa).

Residues 37–41 (QLRIK) and asparagine 69 contribute to the 4-amino-2-methyl-5-(diphosphooxymethyl)pyrimidine site. The Mg(2+) site is built by aspartate 70 and aspartate 89. Serine 108 contacts 4-amino-2-methyl-5-(diphosphooxymethyl)pyrimidine. 134-136 (TQT) lines the 2-[(2R,5Z)-2-carboxy-4-methylthiazol-5(2H)-ylidene]ethyl phosphate pocket. Residue lysine 137 coordinates 4-amino-2-methyl-5-(diphosphooxymethyl)pyrimidine. 2-[(2R,5Z)-2-carboxy-4-methylthiazol-5(2H)-ylidene]ethyl phosphate-binding positions include glycine 166 and 186–187 (VS).

This sequence belongs to the thiamine-phosphate synthase family. Mg(2+) is required as a cofactor.

The catalysed reaction is 2-[(2R,5Z)-2-carboxy-4-methylthiazol-5(2H)-ylidene]ethyl phosphate + 4-amino-2-methyl-5-(diphosphooxymethyl)pyrimidine + 2 H(+) = thiamine phosphate + CO2 + diphosphate. It carries out the reaction 2-(2-carboxy-4-methylthiazol-5-yl)ethyl phosphate + 4-amino-2-methyl-5-(diphosphooxymethyl)pyrimidine + 2 H(+) = thiamine phosphate + CO2 + diphosphate. The enzyme catalyses 4-methyl-5-(2-phosphooxyethyl)-thiazole + 4-amino-2-methyl-5-(diphosphooxymethyl)pyrimidine + H(+) = thiamine phosphate + diphosphate. The protein operates within cofactor biosynthesis; thiamine diphosphate biosynthesis; thiamine phosphate from 4-amino-2-methyl-5-diphosphomethylpyrimidine and 4-methyl-5-(2-phosphoethyl)-thiazole: step 1/1. Functionally, condenses 4-methyl-5-(beta-hydroxyethyl)thiazole monophosphate (THZ-P) and 2-methyl-4-amino-5-hydroxymethyl pyrimidine pyrophosphate (HMP-PP) to form thiamine monophosphate (TMP). The sequence is that of Thiamine-phosphate synthase from Escherichia coli O157:H7.